Here is an 80-residue protein sequence, read N- to C-terminus: Cell division protein ZapB (80 aa).

Residues 3–80 (FEVFEKLESK…ALLGKMEDVQ (78 aa)) are a coiled coil.

It belongs to the ZapB family. Homodimer. The ends of the coiled-coil dimer bind to each other, forming polymers. Interacts with FtsZ.

The protein localises to the cytoplasm. Functionally, non-essential, abundant cell division factor that is required for proper Z-ring formation. It is recruited early to the divisome by direct interaction with FtsZ, stimulating Z-ring assembly and thereby promoting cell division earlier in the cell cycle. Its recruitment to the Z-ring requires functional FtsA or ZipA. This chain is Cell division protein ZapB, found in Proteus mirabilis (strain HI4320).